Consider the following 1011-residue polypeptide: Poly [ADP-ribose] polymerase 1 (1011 aa).

2 consecutive PARP-type zinc fingers follow at residues 9 to 91 and 113 to 203; these read YRAE…ETGA and FAAE…PATK. 8 residues coordinate Zn(2+): cysteine 21, cysteine 24, histidine 53, cysteine 56, cysteine 125, cysteine 128, histidine 159, and cysteine 162. Positions 198–235 are disordered; that stretch reads QLPATKTEGKRKGEEVDGNVVAKKKSRKEKEKESKQEK. 2 consecutive short sequence motifs (nuclear localization signal) follow at residues 207–209 and 220–225; these read KRK and KKKSRK. The region spanning 224–358 is the PADR1 zinc-binding domain; the sequence is RKEKEKESKQ…CKKQDRIFPP (135 aa). The segment covering 225–235 has biased composition (basic and acidic residues); that stretch reads KEKEKESKQEK. A zinc ribbon region spans residues 289–331; sequence GALLPCEECKGQFVFKSDAYYCSGDITAWTKCVAKTQTPNRKD. Zn(2+) is bound by residues cysteine 294, cysteine 297, cysteine 310, and cysteine 320. The tract at residues 359 to 378 is disordered; the sequence is EAATVNSAPPPPASAPLTET. Residues 371-522 are automodification domain; that stretch reads ASAPLTETVT…PSKSEKKMKL (152 aa). The BRCT domain maps to 382 to 473; it reads PQDKPLTNMK…KGFQELLSLH (92 aa). Glutamate 403, glutamate 404, glutamate 410, glutamate 411, glutamate 432, glutamate 434, glutamate 441, glutamate 442, glutamate 453, glutamate 454, glutamate 468, glutamate 481, glutamate 485, glutamate 488, glutamate 509, glutamate 510, and glutamate 517 each carry polyADP-ribosyl glutamic acid. The segment at 496–519 is disordered; it reads SKPANMKSAGKVKEEQGPSKSEKK. Residues 506–519 are compositionally biased toward basic and acidic residues; sequence KVKEEQGPSKSEKK. A WGR domain is found at 539 to 635; the sequence is SAHVFEKGGK…KNFTKYPKKF (97 aa). The PARP alpha-helical domain maps to 659-776; it reads KSKLAKPIQD…DIEVAYSLLR (118 aa). The region spanning 785–1011 is the PARP catalytic domain; the sequence is DPIDINYEKL…LKFNYKTSLW (227 aa). NAD(+)-binding positions include 859-861, glycine 868, arginine 875, and serine 901; that span reads HGS. The For poly [ADP-ribose] polymerase activity role is filled by glutamate 985.

It belongs to the ARTD/PARP family. As to quaternary structure, homodimer; PARP-type zinc-fingers from separate parp1 molecules form a dimer module that specifically recognizes DNA strand breaks. Poly-ADP-ribosylated on serine, glutamate and aspartate residues by autocatalysis. Auto-ADP-ribosylation on serine takes place following interaction with HPF1. Auto poly-ADP-ribosylation on serine residues promotes its dissociation from chromatin.

It localises to the chromosome. The protein resides in the nucleus. Its subcellular location is the nucleolus. It is found in the cytoplasm. The protein localises to the cytosol. It catalyses the reaction NAD(+) + (ADP-D-ribosyl)n-acceptor = nicotinamide + (ADP-D-ribosyl)n+1-acceptor + H(+).. The enzyme catalyses L-seryl-[protein] + NAD(+) = O-(ADP-D-ribosyl)-L-seryl-[protein] + nicotinamide + H(+). It carries out the reaction L-aspartyl-[protein] + NAD(+) = 4-O-(ADP-D-ribosyl)-L-aspartyl-[protein] + nicotinamide. The catalysed reaction is L-glutamyl-[protein] + NAD(+) = 5-O-(ADP-D-ribosyl)-L-glutamyl-[protein] + nicotinamide. It catalyses the reaction L-tyrosyl-[protein] + NAD(+) = O-(ADP-D-ribosyl)-L-tyrosyl-[protein] + nicotinamide + H(+). The enzyme catalyses L-histidyl-[protein] + NAD(+) = N(tele)-(ADP-D-ribosyl)-L-histidyl-[protein] + nicotinamide + H(+). Its activity is regulated as follows. ADP-ribosyltransferase activity is regulated via an allosteric activation mechanism. In absence of activation signal, parp1 is autoinhibited by the PARP alpha-helical domain (also named HD region), which prevents effective NAD(+)-binding. Activity is highly stimulated by signals, such as DNA strand breaks. Binding to damaged DNA unfolds the PARP alpha-helical domain, relieving autoinhibition. Poly-ADP-ribosyltransferase activity is tightly regulated and parp1 is removed from damaged chromatin following initial poly-ADP-ribosylation of chromatin to avoid prolonged residence (trapping) that has cytotoxic consequences. A number of factors or post-translational modifications (auto-poly-ADP-ribosylation) promote parp1 removal from chromatin. Poly-ADP-ribosyltransferase that mediates poly-ADP-ribosylation of proteins and plays a key role in DNA repair. Mediates glutamate, aspartate, serine, histidine or tyrosine ADP-ribosylation of proteins: the ADP-D-ribosyl group of NAD(+) is transferred to the acceptor carboxyl group of target residues and further ADP-ribosyl groups are transferred to the 2'-position of the terminal adenosine moiety, building up a polymer with an average chain length of 20-30 units. Serine ADP-ribosylation of proteins constitutes the primary form of ADP-ribosylation of proteins in response to DNA damage. Specificity for the different amino acids is conferred by interacting factors, such as hpf1 and nmnat1. Following interaction with hpf1, catalyzes serine ADP-ribosylation of target proteins; hpf1 confers serine specificity by completing the parp1 active site. Also catalyzes tyrosine ADP-ribosylation of target proteins following interaction with hpf1. Following interaction with nmnat1, catalyzes glutamate and aspartate ADP-ribosylation of target proteins; nmnat1 confers glutamate and aspartate specificity. Parp1 initiates the repair of DNA breaks: recognizes and binds DNA breaks within chromatin and recruits hpf1, licensing serine ADP-ribosylation of target proteins, such as histones (H2BS6ADPr and H3S10ADPr), thereby promoting decompaction of chromatin and the recruitment of repair factors leading to the reparation of DNA strand breaks. In addition to base excision repair (BER) pathway, also involved in double-strand breaks (DSBs) repair. Mediates the poly-ADP-ribosylation of a number of proteins. In addition to proteins, also able to ADP-ribosylate DNA: catalyzes ADP-ribosylation of DNA strand break termini containing terminal phosphates and a 2'-OH group in single- and double-stranded DNA, respectively. Parp1-mediated DNA repair in neurons plays a role in sleep: senses DNA damage in neurons and promotes sleep, facilitating efficient DNA repair. In addition to DNA repair, also involved in other processes, such as transcription regulation, programmed cell death, membrane repair, adipogenesis and innate immunity. Acts as a repressor of transcription: binds to nucleosomes and modulates chromatin structure in a manner similar to histone H1, thereby altering RNA polymerase II. Acts both as a positive and negative regulator of transcription elongation, depending on the context. Poly-ADP-ribose chains generated by parp1 also play a role in poly-ADP-ribose-dependent cell death, a process named parthanatos. Also acts as a negative regulator of the cGAS-STING pathway by mediating poly-ADP-ribosylation and inactivation of cgas. Acts as a negative regulator of adipogenesis by catalyzing poly ADP-ribosylation of histone H2B on 'Glu-35' (H2BE35ADPr). In Gallus gallus (Chicken), this protein is Poly [ADP-ribose] polymerase 1 (PARP1).